A 426-amino-acid polypeptide reads, in one-letter code: MLIRFKGAHIVDPGNINEQKDLLVKDGLVHALLDPGAADPEPGIDTVDVTGMLLVPGLIDLHVHLREPGHEYKETIQTGLMAAAKGGFTAVCPMPNTSPVNDNAQVTRFILDRAKAAGLSRVYPVGAITLGLKGETLAEYGEMKQAGMVAITDDGRPVENARVMRRAMEYATGLGLPVMSHSEDLSLARDGAMNEGSFATRIGIKGIPNAAESIMVMREIAIAELTHARVHIAHVSCEESVDAIRHGKQRGVQVTCETAPHYFTLTDKAVGDYDTHAKMNPPLRSEADRLAVIKGLQDGTIDCIATDHAPHSPLEKAVEFDQAAFGIIGLETSLVLSLKLVQDELLSMETLVEKMSRNPARFLGLDNRLIPGNPADITVIDPDRVHVIDPETFVSKSRNTPFAGIEVKGEVLLTMVEGRIIYQREI.

H62 and H64 together coordinate Zn(2+). Substrate contacts are provided by residues H64–R66 and N96. D154, H181, and H234 together coordinate Zn(2+). N280 lines the substrate pocket. A Zn(2+)-binding site is contributed by D307. D307 is an active-site residue. Substrate-binding positions include H311 and F325–G326.

This sequence belongs to the metallo-dependent hydrolases superfamily. DHOase family. Class I DHOase subfamily. The cofactor is Zn(2+).

It carries out the reaction (S)-dihydroorotate + H2O = N-carbamoyl-L-aspartate + H(+). Its pathway is pyrimidine metabolism; UMP biosynthesis via de novo pathway; (S)-dihydroorotate from bicarbonate: step 3/3. Its function is as follows. Catalyzes the reversible cyclization of carbamoyl aspartate to dihydroorotate. The chain is Dihydroorotase from Desulforapulum autotrophicum (strain ATCC 43914 / DSM 3382 / VKM B-1955 / HRM2) (Desulfobacterium autotrophicum).